The sequence spans 171 residues: 3-hydroxydecanoyl-[acyl-carrier-protein] dehydratase (171 aa).

The active site involves His-70.

This sequence belongs to the thioester dehydratase family. FabA subfamily. Homodimer.

The protein resides in the cytoplasm. It catalyses the reaction a (3R)-hydroxyacyl-[ACP] = a (2E)-enoyl-[ACP] + H2O. It carries out the reaction (3R)-hydroxydecanoyl-[ACP] = (2E)-decenoyl-[ACP] + H2O. The enzyme catalyses (2E)-decenoyl-[ACP] = (3Z)-decenoyl-[ACP]. The protein operates within lipid metabolism; fatty acid biosynthesis. Its function is as follows. Necessary for the introduction of cis unsaturation into fatty acids. Catalyzes the dehydration of (3R)-3-hydroxydecanoyl-ACP to E-(2)-decenoyl-ACP and then its isomerization to Z-(3)-decenoyl-ACP. Can catalyze the dehydratase reaction for beta-hydroxyacyl-ACPs with saturated chain lengths up to 16:0, being most active on intermediate chain length. This Shewanella sp. (strain MR-4) protein is 3-hydroxydecanoyl-[acyl-carrier-protein] dehydratase.